We begin with the raw amino-acid sequence, 490 residues long: ATP synthase subunit beta (490 aa).

173–180 (GGAGVGKT) is a binding site for ATP.

It belongs to the ATPase alpha/beta chains family. As to quaternary structure, F-type ATPases have 2 components, CF(1) - the catalytic core - and CF(0) - the membrane proton channel. CF(1) has five subunits: alpha(3), beta(3), gamma(1), delta(1), epsilon(1). CF(0) has three main subunits: a(1), b(2) and c(9-12). The alpha and beta chains form an alternating ring which encloses part of the gamma chain. CF(1) is attached to CF(0) by a central stalk formed by the gamma and epsilon chains, while a peripheral stalk is formed by the delta and b chains.

The protein localises to the cell membrane. The enzyme catalyses ATP + H2O + 4 H(+)(in) = ADP + phosphate + 5 H(+)(out). Its function is as follows. Produces ATP from ADP in the presence of a proton gradient across the membrane. The catalytic sites are hosted primarily by the beta subunits. The protein is ATP synthase subunit beta of Bifidobacterium longum (strain DJO10A).